Here is a 90-residue protein sequence, read N- to C-terminus: Probable Fe(2+)-trafficking protein (90 aa).

This sequence belongs to the Fe(2+)-trafficking protein family.

Its function is as follows. Could be a mediator in iron transactions between iron acquisition and iron-requiring processes, such as synthesis and/or repair of Fe-S clusters in biosynthetic enzymes. The chain is Probable Fe(2+)-trafficking protein from Vibrio cholerae serotype O1 (strain ATCC 39541 / Classical Ogawa 395 / O395).